Reading from the N-terminus, the 914-residue chain is Probable UDP-N-acetylglucosamine--peptide N-acetylglucosaminyltransferase SPINDLY (914 aa).

Residues 1-39 (MVGLEDDTERERSPVVENGFSNGSRSSSSSAGVLSPSRK) are disordered. The segment covering 19–37 (GFSNGSRSSSSSAGVLSPS) has biased composition (low complexity). Serine 35 bears the Phosphoserine mark. TPR repeat units lie at residues 43–76 (GNDT…DSKN), 77–110 (VEAH…DPHN), 112–144 (CALT…DASY), 152–185 (AIVL…DPHY), 186–219 (APAY…RPMY), 220–253 (AEAY…SPNF), 261–294 (AIAL…NWHY), 295–328 (ADAM…NPHC), 329–362 (AEAC…KPNF), 364–396 (QSLN…NPTY), and 397–430 (AEAF…DPDS). A catalytic region region spans residues 431–914 (RNAGQNRLLA…QLSKRMDSTS (484 aa)). A disordered region spans residues 866 to 914 (PLISKDLGPSRVSVTGEATPSLKANGSAPVPSSLPTQSPQLSKRMDSTS). Residues 877 to 889 (VSVTGEATPSLKA) are compositionally biased toward polar residues. Residues 894 to 907 (PVPSSLPTQSPQLS) are compositionally biased toward low complexity.

Belongs to the glycosyltransferase 41 family. O-GlcNAc transferase subfamily. Homomultimer; via its TPR repeats. Interacts with GI. Interacts with TCP14 and TCP15. Interacts (via N-terminus) with APRR5. Interacts with CPN20. As to expression, widely expressed. Present throughout the plant (at protein level).

The protein localises to the cytoplasm. It is found in the nucleus. The catalysed reaction is L-seryl-[protein] + UDP-N-acetyl-alpha-D-glucosamine = 3-O-(N-acetyl-beta-D-glucosaminyl)-L-seryl-[protein] + UDP + H(+). It catalyses the reaction L-threonyl-[protein] + UDP-N-acetyl-alpha-D-glucosamine = 3-O-(N-acetyl-beta-D-glucosaminyl)-L-threonyl-[protein] + UDP + H(+). It carries out the reaction L-seryl-[protein] + GDP-beta-L-fucose = 3-O-(alpha-L-fucosyl)-L-seryl-[protein] + GDP + H(+). The enzyme catalyses L-threonyl-[protein] + GDP-beta-L-fucose = 3-O-(alpha-L-fucosyl)-L-threonyl-[protein] + GDP + H(+). The protein operates within protein modification; protein glycosylation. Its function is as follows. Probable O-linked N-acetylglucosamine transferase (OGT) involved in various processes such as gibberellin (GA) signaling pathway and circadian clock. OGTs catalyze the addition of nucleotide-activated sugars directly onto the polypeptide through O-glycosidic linkage with the hydroxyl of serine or threonine. Probably acts by adding O-linked sugars to yet unknown proteins. Acts as a repressor of GA signaling pathway to inhibit hypocotyl elongation. Functions with GIGANTEA (GI) in pathways controlling flowering, circadian cotyledon movements and hypocotyl elongation. Acts as a light-regulated promoter of elongation via its interaction with GI. Acts as an activator of cytokinin signaling. Required with SEC for gamete and seed development. Its OGT activity has been proved in vitro but not in vivo. Possesses O-fucosyltransferase activity on specific serine and threonine residues. Mediates O-fucosylation of the DELLA protein RGA, a repressor of the GA signaling pathway. O-fucosylation enhances RGA activity by promoting RGA binding to key transcription factors in brassinosteroid and light-signaling pathways. Regulates root hair patterning upstream of the transcription factor WER, independently of DELLA proteins and GA signaling. Involved in abscisic acid (ABA) signaling partly through functional ABAR. Mediates O-fucosylation of CPN20 that may depress ABA responses during seed germination and seedling development. Involved in the modulation of the pace of the circadian clock by mediating O-fucosylation of APRR5, one of the core circadian clock components. O-fucosylation promotes APRR5 proteolysis. This is Probable UDP-N-acetylglucosamine--peptide N-acetylglucosaminyltransferase SPINDLY from Arabidopsis thaliana (Mouse-ear cress).